We begin with the raw amino-acid sequence, 291 residues long: Meteorin (291 aa).

A signal peptide spans 1–21; that stretch reads MLVATLLCALCCGLLAASAHA. 5 disulfides stabilise this stretch: Cys-28/Cys-49, Cys-80/Cys-116, Cys-169/Cys-240, Cys-172/Cys-264, and Cys-182/Cys-286.

Belongs to the meteorin family. Monomer. In terms of tissue distribution, highly expressed in brain. Expressed in undifferentiated neural progenitors and in astrocyte lineage, particularly in Bergmann glia, a subtype of radial glia, and a few discrete neuronal populations residing in the superior colliculus, the ocular motor nucleus, the raphe and pontine nuclei, and in various thalamic nuclei. Weakly expressed in heart, kidney, skeletal muscle, spleen, testis, gut and lung.

The protein resides in the secreted. Functionally, involved in both glial cell differentiation and axonal network formation during neurogenesis. Promotes astrocyte differentiation and transforms cerebellar astrocytes into radial glia. Also induces axonal extension in small and intermediate neurons of sensory ganglia by activating nearby satellite glia. The protein is Meteorin (Metrn) of Mus musculus (Mouse).